Here is a 144-residue protein sequence, read N- to C-terminus: Large ribosomal subunit protein uL11 (144 aa).

It belongs to the universal ribosomal protein uL11 family. As to quaternary structure, part of the ribosomal stalk of the 50S ribosomal subunit. Interacts with L10 and the large rRNA to form the base of the stalk. L10 forms an elongated spine to which L12 dimers bind in a sequential fashion forming a multimeric L10(L12)X complex. One or more lysine residues are methylated.

Forms part of the ribosomal stalk which helps the ribosome interact with GTP-bound translation factors. This chain is Large ribosomal subunit protein uL11, found in Acidiphilium cryptum (strain JF-5).